Here is a 272-residue protein sequence, read N- to C-terminus: tRNA pseudouridine synthase A (272 aa).

Aspartate 52 serves as the catalytic Nucleophile. Tyrosine 110 serves as a coordination point for substrate.

It belongs to the tRNA pseudouridine synthase TruA family. As to quaternary structure, homodimer.

The catalysed reaction is uridine(38/39/40) in tRNA = pseudouridine(38/39/40) in tRNA. Functionally, formation of pseudouridine at positions 38, 39 and 40 in the anticodon stem and loop of transfer RNAs. This chain is tRNA pseudouridine synthase A, found in Cupriavidus necator (strain ATCC 17699 / DSM 428 / KCTC 22496 / NCIMB 10442 / H16 / Stanier 337) (Ralstonia eutropha).